The sequence spans 581 residues: Arginine--tRNA ligase (581 aa).

The 'HIGH' region motif lies at 126-136 (PNLAKEMHVGH).

It belongs to the class-I aminoacyl-tRNA synthetase family. In terms of assembly, monomer.

The protein localises to the cytoplasm. The catalysed reaction is tRNA(Arg) + L-arginine + ATP = L-arginyl-tRNA(Arg) + AMP + diphosphate. This chain is Arginine--tRNA ligase, found in Shewanella denitrificans (strain OS217 / ATCC BAA-1090 / DSM 15013).